The primary structure comprises 203 residues: Outer-membrane lipoprotein LolB (203 aa).

The N-terminal stretch at 1-18 (MTLRSFLILLLSSIVLAG) is a signal peptide. Cysteine 19 carries the N-palmitoyl cysteine lipid modification. Residue cysteine 19 is the site of S-diacylglycerol cysteine attachment.

It belongs to the LolB family. In terms of assembly, monomer.

It is found in the cell outer membrane. Functionally, plays a critical role in the incorporation of lipoproteins in the outer membrane after they are released by the LolA protein. This Vibrio campbellii (strain ATCC BAA-1116) protein is Outer-membrane lipoprotein LolB.